Reading from the N-terminus, the 248-residue chain is MSFVVIIPARFASTRLPGKPLQDINGKPMIVHVLERARESGADRIIVATDHPDVASAVEAAGGEVCMTRADHQSGTERLAEVVEKCAFSDDTIIVNIQGDEPMIPPAIVRQVAENLASSSSGMATLAVPIHDAEEAFNPNAVKVVMDAQGYALYFSRATIPWDRDRFAHSRETIGDSLLRHIGIYGYRAGFIRRYVSWAPSPLEQIEMLEQLRVLWYGEKIHVAVAAEVPGTGVDTPEDLERVRAELR.

The protein belongs to the KdsB family.

Its subcellular location is the cytoplasm. It carries out the reaction 3-deoxy-alpha-D-manno-oct-2-ulosonate + CTP = CMP-3-deoxy-beta-D-manno-octulosonate + diphosphate. The protein operates within nucleotide-sugar biosynthesis; CMP-3-deoxy-D-manno-octulosonate biosynthesis; CMP-3-deoxy-D-manno-octulosonate from 3-deoxy-D-manno-octulosonate and CTP: step 1/1. It functions in the pathway bacterial outer membrane biogenesis; lipopolysaccharide biosynthesis. Its function is as follows. Activates KDO (a required 8-carbon sugar) for incorporation into bacterial lipopolysaccharide in Gram-negative bacteria. The polypeptide is 3-deoxy-manno-octulosonate cytidylyltransferase (Klebsiella pneumoniae (strain 342)).